The sequence spans 397 residues: MEKTMLEQKLENTILPLLLKKELINKIISEKIEDENIIRDIISETVKSYERTLVEPNESVGVVAAQSLGEPGTQMTMRTFHYAGVAELNVTLGLPRMIEIVDARKEPSTPTMTVYLTEDYAFDKSKAEEVAKNIESITVQNIAQDIHIDMVKLAINVVLNPESMKQRNITADDVMEAIKKKMKLKIEQEGNILRLIIKTPSLKALRKRIPKVKSIHLKGVPNIPRVIVKKDDTMGEYILHSEGSNLSAVFEIDGVDMVRTTSNNIVEIQDVLGIEAARNAIINEISGVLNQQGLNVDIRHLMVIADIMTADGSVKSIGRHGLSGEKASVLARAAFEETVKHLYSAAEKGHSDKLSGVVENIIVGKPISMGTGCVDVYIDRDYEEGKDLMITVEKEEN.

Belongs to the RNA polymerase beta' chain family. Part of the RNA polymerase complex.

The protein resides in the cytoplasm. The enzyme catalyses RNA(n) + a ribonucleoside 5'-triphosphate = RNA(n+1) + diphosphate. Its function is as follows. DNA-dependent RNA polymerase (RNAP) catalyzes the transcription of DNA into RNA using the four ribonucleoside triphosphates as substrates. Forms part of the jaw domain. This Methanococcus aeolicus (strain ATCC BAA-1280 / DSM 17508 / OCM 812 / Nankai-3) protein is DNA-directed RNA polymerase subunit Rpo1C.